Consider the following 267-residue polypeptide: Dihydropteroate synthase (267 aa).

A Pterin-binding domain is found at 1–251 (MTKTKIMGIL…NVELNAKLAK (251 aa)). Asn11 provides a ligand contact to Mg(2+). Residues Thr51, Asp84, Asn103, Asp167, Lys203, and 239–241 (RVH) each bind (7,8-dihydropterin-6-yl)methyl diphosphate.

The protein belongs to the DHPS family. In terms of assembly, homodimer. Requires Mg(2+) as cofactor.

The enzyme catalyses (7,8-dihydropterin-6-yl)methyl diphosphate + 4-aminobenzoate = 7,8-dihydropteroate + diphosphate. Its pathway is cofactor biosynthesis; tetrahydrofolate biosynthesis; 7,8-dihydrofolate from 2-amino-4-hydroxy-6-hydroxymethyl-7,8-dihydropteridine diphosphate and 4-aminobenzoate: step 1/2. Functionally, catalyzes the condensation of para-aminobenzoate (pABA) with 6-hydroxymethyl-7,8-dihydropterin diphosphate (DHPt-PP) to form 7,8-dihydropteroate (H2Pte), the immediate precursor of folate derivatives. The chain is Dihydropteroate synthase (folP) from Staphylococcus aureus (strain Mu50 / ATCC 700699).